The chain runs to 437 residues: UDP-N-acetylmuramoylalanine--D-glutamate ligase (437 aa).

115–121 is a binding site for ATP; that stretch reads GSNGKST.

Belongs to the MurCDEF family.

It localises to the cytoplasm. It carries out the reaction UDP-N-acetyl-alpha-D-muramoyl-L-alanine + D-glutamate + ATP = UDP-N-acetyl-alpha-D-muramoyl-L-alanyl-D-glutamate + ADP + phosphate + H(+). It participates in cell wall biogenesis; peptidoglycan biosynthesis. In terms of biological role, cell wall formation. Catalyzes the addition of glutamate to the nucleotide precursor UDP-N-acetylmuramoyl-L-alanine (UMA). This is UDP-N-acetylmuramoylalanine--D-glutamate ligase from Vibrio campbellii (strain ATCC BAA-1116).